Reading from the N-terminus, the 446-residue chain is Baeyer-Villiger oxidase mdpL (446 aa).

It belongs to the AflY oxidoreductase family. NADPH is required as a cofactor.

The protein operates within secondary metabolite biosynthesis. Baeyer-Villiger oxidase; part of the gene cluster that mediates the biosynthesis of monodictyphenone, a prenyl xanthone derivative. The pathway begins with the synthesis of atrochrysone thioester by the polyketide synthase (PKS) mdpG. The atrochrysone carboxyl ACP thioesterase mdpF then breaks the thioester bond and releases the atrochrysone carboxylic acid from mdpG. The atrochrysone carboxylic acid is then converted to atrochrysone which is further transformed into emodin anthrone. The next step is performed by the anthrone oxygenase mdpH that catalyzes the oxidation of emodinanthrone to emodin. Emodin is further modified to yield monodictyphenone via several steps involving mdpB, mdpC mdpJ, mdpK and mdpL. These enzymes with xptA, xptB and xptC are also proposed to be involved in the synthesis of shamixanthone from emodin. Especially, direct reduction of emodin by the short chain dehydrogenase mdpC followed by dehydration catalyzed by the scytalone dehydratase-like protein mdpB gives loss of oxygen and formation of chrysophanol intermediate in two simple steps. The sequence is that of Baeyer-Villiger oxidase mdpL from Emericella nidulans (strain FGSC A4 / ATCC 38163 / CBS 112.46 / NRRL 194 / M139) (Aspergillus nidulans).